Consider the following 434-residue polypeptide: Enolase (434 aa).

Residue glutamine 163 coordinates (2R)-2-phosphoglycerate. Glutamate 205 serves as the catalytic Proton donor. The Mg(2+) site is built by aspartate 242, glutamate 291, and aspartate 318. Residues lysine 343, arginine 372, serine 373, and lysine 394 each coordinate (2R)-2-phosphoglycerate. Lysine 343 (proton acceptor) is an active-site residue.

It belongs to the enolase family. Mg(2+) serves as cofactor.

The protein resides in the cytoplasm. Its subcellular location is the secreted. The protein localises to the cell surface. The enzyme catalyses (2R)-2-phosphoglycerate = phosphoenolpyruvate + H2O. Its pathway is carbohydrate degradation; glycolysis; pyruvate from D-glyceraldehyde 3-phosphate: step 4/5. In terms of biological role, catalyzes the reversible conversion of 2-phosphoglycerate (2-PG) into phosphoenolpyruvate (PEP). It is essential for the degradation of carbohydrates via glycolysis. This chain is Enolase, found in Streptococcus thermophilus (strain CNRZ 1066).